The sequence spans 218 residues: Mitochondrial import inner membrane translocase subunit TIM17-1 (218 aa).

4 consecutive transmembrane segments (helical) span residues 19-36 (VGGA…YHLI), 66-82 (FSVW…ALVY), 89-105 (PWNS…FLSL), and 116-133 (ALVG…GIML).

It belongs to the Tim17/Tim22/Tim23 family. Component of the TIM17:23 complex at least composed of TIM23, TIM17 and TIM50. The complex interacts with the TIM44 component of the PAM complex. As to expression, expressed in flowers, leaves and cotyledons, and at very low levels in roots.

The protein resides in the mitochondrion inner membrane. Its function is as follows. Essential component of the TIM17:23 complex, a complex that mediates the translocation of transit peptide-containing proteins across the mitochondrial inner membrane. Links the inner and outer membranes. This chain is Mitochondrial import inner membrane translocase subunit TIM17-1 (TIM17-1), found in Arabidopsis thaliana (Mouse-ear cress).